The chain runs to 76 residues: Defensin-like protein 71 (76 aa).

The N-terminal stretch at 1–22 is a signal peptide; the sequence is MAMTQVFVIFILLATSLCNSNA. 4 disulfide bridges follow: C36/C74, C40/C63, C49/C72, and C53/C73.

The protein belongs to the DEFL family.

It is found in the secreted. The protein is Defensin-like protein 71 (LCR84) of Arabidopsis thaliana (Mouse-ear cress).